The primary structure comprises 593 residues: Probable serine/threonine-protein kinase fhkA (593 aa).

Residues 1–24 (MSQTNYIPSTPNKSTPPSELSSTP) are disordered. An FHA domain is found at 54-111 (ITIGRSKTCNIVVPELIVSGKHCIITRADAIENGNTNYGLLMIQDQSTNGTFINGKLI). The region spanning 180–472 (YDFIKELGSG…VEQALNHPWI (293 aa)) is the Protein kinase domain. Residues 186–194 (LGSGNFSVV) and Lys209 each bind ATP. Asp307 serves as the catalytic Proton acceptor.

Belongs to the protein kinase superfamily. CAMK Ser/Thr protein kinase family. CHK2 subfamily.

It carries out the reaction L-seryl-[protein] + ATP = O-phospho-L-seryl-[protein] + ADP + H(+). The catalysed reaction is L-threonyl-[protein] + ATP = O-phospho-L-threonyl-[protein] + ADP + H(+). The chain is Probable serine/threonine-protein kinase fhkA (fhkA) from Dictyostelium discoideum (Social amoeba).